A 122-amino-acid polypeptide reads, in one-letter code: Head fiber dimeric protein (122 aa).

In terms of assembly, homodimer. Interacts with the major capsid protein.

It localises to the virion. In terms of biological role, forms short fibers at the surface of the viral capsid. This Bacteroides intestinalis (Bacteroides phage PhiCrAss001) protein is Head fiber dimeric protein.